Here is a 408-residue protein sequence, read N- to C-terminus: Succinylornithine transaminase (408 aa).

The residue at position 252 (Lys252) is an N6-(pyridoxal phosphate)lysine.

Belongs to the class-III pyridoxal-phosphate-dependent aminotransferase family. AstC subfamily. Requires pyridoxal 5'-phosphate as cofactor.

The catalysed reaction is N(2)-succinyl-L-ornithine + 2-oxoglutarate = N-succinyl-L-glutamate 5-semialdehyde + L-glutamate. It participates in amino-acid degradation; L-arginine degradation via AST pathway; L-glutamate and succinate from L-arginine: step 3/5. Catalyzes the transamination of N(2)-succinylornithine and alpha-ketoglutarate into N(2)-succinylglutamate semialdehyde and glutamate. Can also act as an acetylornithine aminotransferase. In Salmonella choleraesuis (strain SC-B67), this protein is Succinylornithine transaminase.